We begin with the raw amino-acid sequence, 156 residues long: MPRRRVIGQRKILPDPKFGSELLAKFVNILMVDGKKSTAEAIVYTALETLAQRSGKGHLEAFEVALDNVRPTVEVKSRRVGGSTYQVPVEVRPVRRNALAMRWIVEAARKRGDKSMALRLANELSDAAENKGTAVKKREDVHRMADANKAFAHYRW.

It belongs to the universal ribosomal protein uS7 family. As to quaternary structure, part of the 30S ribosomal subunit. Contacts proteins S9 and S11.

One of the primary rRNA binding proteins, it binds directly to 16S rRNA where it nucleates assembly of the head domain of the 30S subunit. Is located at the subunit interface close to the decoding center, probably blocks exit of the E-site tRNA. This Sodalis glossinidius (strain morsitans) protein is Small ribosomal subunit protein uS7.